A 163-amino-acid polypeptide reads, in one-letter code: MHTRAIYPGTFDPITNGHADLIERAAKLFKHVIIGIAANPSKQPRFTLEERVELVNRVTAHLDNVEVVGFSGLLVDFAKEQRASVLVRGLRAVSDFEYEFQLANMNRRLSPDLESVFLTPAEENSFISSTLVKEVALHGGDVSQFVHPEVASALAAKLKLAKA.

Thr10 provides a ligand contact to substrate. Residues 10-11 (TF) and His18 each bind ATP. Substrate is bound by residues Lys42, Leu74, and Arg88. ATP-binding positions include 89 to 91 (GLR), Glu99, and 124 to 130 (NSFISST).

This sequence belongs to the bacterial CoaD family. As to quaternary structure, homohexamer. Requires Mg(2+) as cofactor.

It localises to the cytoplasm. The enzyme catalyses (R)-4'-phosphopantetheine + ATP + H(+) = 3'-dephospho-CoA + diphosphate. It functions in the pathway cofactor biosynthesis; coenzyme A biosynthesis; CoA from (R)-pantothenate: step 4/5. In terms of biological role, reversibly transfers an adenylyl group from ATP to 4'-phosphopantetheine, yielding dephospho-CoA (dPCoA) and pyrophosphate. This chain is Phosphopantetheine adenylyltransferase, found in Shewanella oneidensis (strain ATCC 700550 / JCM 31522 / CIP 106686 / LMG 19005 / NCIMB 14063 / MR-1).